Reading from the N-terminus, the 508-residue chain is Histidine ammonia-lyase (508 aa).

The segment at residues 143–145 (ASG) is a cross-link (5-imidazolinone (Ala-Gly)). 2,3-didehydroalanine (Ser) is present on Ser-144.

The protein belongs to the PAL/histidase family. In terms of processing, contains an active site 4-methylidene-imidazol-5-one (MIO), which is formed autocatalytically by cyclization and dehydration of residues Ala-Ser-Gly.

It is found in the cytoplasm. It carries out the reaction L-histidine = trans-urocanate + NH4(+). Its pathway is amino-acid degradation; L-histidine degradation into L-glutamate; N-formimidoyl-L-glutamate from L-histidine: step 1/3. This chain is Histidine ammonia-lyase, found in Caldanaerobacter subterraneus subsp. tengcongensis (strain DSM 15242 / JCM 11007 / NBRC 100824 / MB4) (Thermoanaerobacter tengcongensis).